Reading from the N-terminus, the 578-residue chain is Protein RIK (578 aa).

The segment at 1 to 34 is disordered; that stretch reads MTEDNDEARVPLSDSSTTNDASRTRQRRKRKWDK. The 68-residue stretch at 206–273 folds into the KH domain; sequence SSNVAARIRG…KSIDDAKRLA (68 aa). The segment covering 413-425 has biased composition (polar residues); it reads ATSLSIPSDNASN. Residues 413-578 are disordered; it reads ATSLSIPSDN…DPDEPLTTRS (166 aa). Positions 472–492 are enriched in pro residues; the sequence is PPSPRSVMPPPPPKTIAPPPS. 2 stretches are compositionally biased toward low complexity: residues 493–503 and 510–521; these read KTMSPPSSKSM and SKTMSPLSSKSM. Over residues 560 to 572 the composition is skewed to acidic residues; the sequence is YGDDEDDDDDPDE.

As to quaternary structure, interacts with AS1. As to expression, expressed in vegetative tissues.

The protein resides in the nucleus. The protein is Protein RIK (RIK) of Arabidopsis thaliana (Mouse-ear cress).